The chain runs to 290 residues: Small ribosomal subunit biogenesis GTPase RsgA (290 aa).

A CP-type G domain is found at Lys-62–Leu-213. GTP-binding positions include Ser-111 to Asp-114 and Gly-156 to Thr-164. 4 residues coordinate Zn(2+): Cys-237, Cys-242, His-244, and Cys-250.

This sequence belongs to the TRAFAC class YlqF/YawG GTPase family. RsgA subfamily. In terms of assembly, monomer. Associates with 30S ribosomal subunit, binds 16S rRNA. The cofactor is Zn(2+).

It localises to the cytoplasm. Functionally, one of several proteins that assist in the late maturation steps of the functional core of the 30S ribosomal subunit. Helps release RbfA from mature subunits. May play a role in the assembly of ribosomal proteins into the subunit. Circularly permuted GTPase that catalyzes slow GTP hydrolysis, GTPase activity is stimulated by the 30S ribosomal subunit. In Streptococcus pyogenes serotype M6 (strain ATCC BAA-946 / MGAS10394), this protein is Small ribosomal subunit biogenesis GTPase RsgA.